The chain runs to 271 residues: Magnesium dechelatase SGR2, chloroplastic (271 aa).

The transit peptide at 1–54 (MCSLATNLLLPSKMKPVFPEKLSTSSLCVTTRRSKMKNRSIVPVARLFGPAIFE) directs the protein to the chloroplast.

Belongs to the staygreen family. As to quaternary structure, interacts with the light harvesting complex II (LHCII). Interacts with the chlorophyll catabolic enzyme (CCE) RCCR.

The protein localises to the plastid. It localises to the chloroplast thylakoid membrane. The enzyme catalyses chlorophyll a + 2 H(+) = pheophytin a + Mg(2+). Functionally, magnesium chelatase involved in chlorophyll a degradation in the chlorophyll-protein complexes of photosystem I (PSI) and photosystem II (PSII). Contributes to the degradation of PSI and PSII in the thylakoid membranes. Required to trigger chlorophyll degradation during natural and dark-induced leaf senescence. Mediates chlorophyll degradation during embryo degreening. Recombinant SGR2 possesses high dechelating activity against chlorophyll a, very low activity against chlorophyllide a, and no activity against chlorophyll b. In Arabidopsis thaliana (Mouse-ear cress), this protein is Magnesium dechelatase SGR2, chloroplastic.